The following is a 186-amino-acid chain: Small ribosomal subunit protein uS19 (186 aa).

The tract at residues 1–95 (MREAIKRYGS…YEELYAQYKQ (95 aa)) is unknown. Residues 96-186 (MTEKKAYVDP…EKTAKVVKKK (91 aa)) form a small ribosomal subunit protein uS19 region.

It belongs to the universal ribosomal protein uS19 family.

Its function is as follows. Protein S19 forms a complex with S13 that binds strongly to the 16S ribosomal RNA. The sequence is that of Small ribosomal subunit protein uS19 from Aquifex aeolicus (strain VF5).